The primary structure comprises 332 residues: Small ribosomal subunit protein uS2 (332 aa).

This sequence belongs to the universal ribosomal protein uS2 family.

The protein is Small ribosomal subunit protein uS2 of Nitrobacter hamburgensis (strain DSM 10229 / NCIMB 13809 / X14).